A 150-amino-acid polypeptide reads, in one-letter code: Large ribosomal subunit protein uL13 (150 aa).

This sequence belongs to the universal ribosomal protein uL13 family. In terms of assembly, part of the 50S ribosomal subunit.

This protein is one of the early assembly proteins of the 50S ribosomal subunit, although it is not seen to bind rRNA by itself. It is important during the early stages of 50S assembly. This Chlorobium phaeobacteroides (strain BS1) protein is Large ribosomal subunit protein uL13.